Here is a 156-residue protein sequence, read N- to C-terminus: Ribosomal RNA large subunit methyltransferase H (156 aa).

Residues leucine 73, glycine 104, and 123–128 (LSSLTL) contribute to the S-adenosyl-L-methionine site.

The protein belongs to the RNA methyltransferase RlmH family. Homodimer.

It localises to the cytoplasm. It carries out the reaction pseudouridine(1915) in 23S rRNA + S-adenosyl-L-methionine = N(3)-methylpseudouridine(1915) in 23S rRNA + S-adenosyl-L-homocysteine + H(+). Functionally, specifically methylates the pseudouridine at position 1915 (m3Psi1915) in 23S rRNA. The protein is Ribosomal RNA large subunit methyltransferase H of Neisseria meningitidis serogroup A / serotype 4A (strain DSM 15465 / Z2491).